The sequence spans 310 residues: Ribosomal RNA small subunit methyltransferase H (310 aa).

S-adenosyl-L-methionine is bound by residues 33–35 (GGH), aspartate 52, phenylalanine 79, aspartate 98, and glutamine 105.

It belongs to the methyltransferase superfamily. RsmH family.

Its subcellular location is the cytoplasm. It carries out the reaction cytidine(1402) in 16S rRNA + S-adenosyl-L-methionine = N(4)-methylcytidine(1402) in 16S rRNA + S-adenosyl-L-homocysteine + H(+). Functionally, specifically methylates the N4 position of cytidine in position 1402 (C1402) of 16S rRNA. The chain is Ribosomal RNA small subunit methyltransferase H from Campylobacter jejuni subsp. doylei (strain ATCC BAA-1458 / RM4099 / 269.97).